We begin with the raw amino-acid sequence, 268 residues long: Interleukin-1 beta (268 aa).

Positions 1-116 (MATVPELTSE…TWDDYSLECD (116 aa)) are excised as a propeptide.

This sequence belongs to the IL-1 family. As to quaternary structure, monomer. In its precursor form, weakly interacts with full-length MEFV; the mature cytokine does not interact at all. Interacts with integrins ITGAV:ITGBV and ITGA5:ITGB1; integrin-binding is required for IL1B signaling. Interacts with cargo receptor TMED10; the interaction is direct and is required for the secretion of IL1B mature form. Interacts with HSP90AB1; the interaction facilitates cargo translocation into the ERGIC. Interacts with HSP90B1; the interaction facilitates cargo translocation into the ERGIC.

It localises to the cytoplasm. It is found in the cytosol. The protein localises to the secreted. Its subcellular location is the lysosome. The protein resides in the extracellular exosome. Potent pro-inflammatory cytokine. Initially discovered as the major endogenous pyrogen, induces prostaglandin synthesis, neutrophil influx and activation, T-cell activation and cytokine production, B-cell activation and antibody production, and fibroblast proliferation and collagen production. Promotes Th17 differentiation of T-cells. Synergizes with IL12/interleukin-12 to induce IFNG synthesis from T-helper 1 (Th1) cells. Plays a role in angiogenesis by inducing VEGF production synergistically with TNF and IL6. Involved in transduction of inflammation downstream of pyroptosis: its mature form is specifically released in the extracellular milieu by passing through the gasdermin-D (GSDMD) pore. The polypeptide is Interleukin-1 beta (IL1B) (Oryctolagus cuniculus (Rabbit)).